We begin with the raw amino-acid sequence, 538 residues long: Probable bifunctional tRNA threonylcarbamoyladenosine biosynthesis protein (538 aa).

A kae1 region spans residues 1 to 327 (MIVLICLGIE…FRTDEVEAPW (327 aa)). Fe cation contacts are provided by H111, H115, and Y132. Residues 132-136 (YVSGG), D164, G177, E181, and N260 each bind L-threonylcarbamoyladenylate. Residue D288 participates in Fe cation binding. One can recognise a Protein kinase domain in the interval 336 to 538 (KLPDNLIAKG…EIESRGRYTH (203 aa)). ATP-binding positions include 342–350 (IAKGAESDI) and K363. D452 serves as the catalytic Proton acceptor; for kinase activity.

This sequence in the N-terminal section; belongs to the KAE1 / TsaD family. In the C-terminal section; belongs to the protein kinase superfamily. Tyr protein kinase family. BUD32 subfamily. In terms of assembly, component of the KEOPS complex that consists of Kae1, Bud32, Cgi121 and Pcc1; the whole complex dimerizes. The cofactor is Fe(2+).

The protein resides in the cytoplasm. The enzyme catalyses L-seryl-[protein] + ATP = O-phospho-L-seryl-[protein] + ADP + H(+). It catalyses the reaction L-threonyl-[protein] + ATP = O-phospho-L-threonyl-[protein] + ADP + H(+). The catalysed reaction is L-threonylcarbamoyladenylate + adenosine(37) in tRNA = N(6)-L-threonylcarbamoyladenosine(37) in tRNA + AMP + H(+). Functionally, required for the formation of a threonylcarbamoyl group on adenosine at position 37 (t(6)A37) in tRNAs that read codons beginning with adenine. Is a component of the KEOPS complex that is probably involved in the transfer of the threonylcarbamoyl moiety of threonylcarbamoyl-AMP (TC-AMP) to the N6 group of A37. The Kae1 domain likely plays a direct catalytic role in this reaction. The Bud32 domain probably displays kinase activity that regulates Kae1 function. The sequence is that of Probable bifunctional tRNA threonylcarbamoyladenosine biosynthesis protein from Methanobrevibacter smithii (strain ATCC 35061 / DSM 861 / OCM 144 / PS).